A 531-amino-acid chain; its full sequence is Sterol 26-hydroxylase, mitochondrial (531 aa).

The N-terminal 33 residues, 1–33, are a transit peptide targeting the mitochondrion; it reads MAALGCARLRWALRGAGRGLCPHGARAKAAIPA. Position 283 is an N6-acetyllysine (lysine 283). Residues 384–398 form a sterol-binding region; it reads PLLKAVLKETLRLYP. Cysteine 476 provides a ligand contact to heme. N6-acetyllysine is present on residues lysine 509 and lysine 520.

This sequence belongs to the cytochrome P450 family. Interacts with HSP70; this interaction is required for initial targeting to mitochondria. The cofactor is heme. As to expression, expressed in the neural retina and underlying retinal pigment epithelium (at protein level). Expressed in the gray and white matter of cerebellum (at protein level).

The protein localises to the mitochondrion inner membrane. The enzyme catalyses 5beta-cholestane-3alpha,7alpha,12alpha-triol + 6 reduced [adrenodoxin] + 3 O2 + 5 H(+) = (25R)-3alpha,7alpha,12alpha-trihydroxy-5beta-cholestan-26-oate + 6 oxidized [adrenodoxin] + 4 H2O. The catalysed reaction is cholestanol + 2 reduced [adrenodoxin] + O2 + 2 H(+) = (25R)-26-hydroxycholestanol + 2 oxidized [adrenodoxin] + H2O. It carries out the reaction (25R)-3beta-hydroxycholest-5-en-7-one-26-al + 2 reduced [adrenodoxin] + O2 + H(+) = (25R)-3beta-hydroxycholest-5-en-7-one-26-oate + 2 oxidized [adrenodoxin] + H2O. It catalyses the reaction (25R)-3beta,26-dihydroxycholest-5-en-7-one + 2 reduced [adrenodoxin] + O2 + 2 H(+) = (25R)-3beta-hydroxycholest-5-en-7-one-26-al + 2 oxidized [adrenodoxin] + 2 H2O. The enzyme catalyses 7-oxocholesterol + 2 reduced [adrenodoxin] + O2 + 2 H(+) = (25R)-3beta,26-dihydroxycholest-5-en-7-one + 2 oxidized [adrenodoxin] + H2O. The catalysed reaction is calciol + 2 reduced [adrenodoxin] + O2 + 2 H(+) = calcidiol + 2 oxidized [adrenodoxin] + H2O. It carries out the reaction (25R)-5beta-cholestane-3alpha,7alpha,12alpha,26-tetrol + 2 reduced [adrenodoxin] + O2 + 2 H(+) = (25R)-3alpha,7alpha,12alpha-trihydroxy-5beta-cholestan-26-al + 2 oxidized [adrenodoxin] + 2 H2O. It catalyses the reaction 2 reduced [adrenodoxin] + cholesterol + O2 + 2 H(+) = (25R)-cholest-5-ene-3beta,26-diol + 2 oxidized [adrenodoxin] + H2O. The enzyme catalyses (25R)-3beta,4beta-dihydroxycholest-5-en-26-al + 2 reduced [adrenodoxin] + O2 + H(+) = (25R)-3beta,4beta-dihydroxycholest-5-en-26-oate + 2 oxidized [adrenodoxin] + H2O. The catalysed reaction is (25R)-4beta,26-dihydroxycholesterol + 2 reduced [adrenodoxin] + O2 + 2 H(+) = (25R)-3beta,4beta-dihydroxycholest-5-en-26-al + 2 oxidized [adrenodoxin] + 2 H2O. It carries out the reaction 4beta-hydroxycholesterol + 2 reduced [adrenodoxin] + O2 + 2 H(+) = (25R)-4beta,26-dihydroxycholesterol + 2 oxidized [adrenodoxin] + H2O. It catalyses the reaction (25R)-3beta-hydroxy-5-cholesten-26-al + 2 reduced [adrenodoxin] + O2 + H(+) = (25R)-3beta-hydroxy-5-cholestenoate + 2 oxidized [adrenodoxin] + H2O. The enzyme catalyses (25R)-cholest-5-ene-3beta,26-diol + 2 reduced [adrenodoxin] + O2 + 2 H(+) = (25R)-3beta-hydroxy-5-cholesten-26-al + 2 oxidized [adrenodoxin] + 2 H2O. The catalysed reaction is (25R)-3alpha,7alpha,12alpha-trihydroxy-5beta-cholestan-26-al + 2 reduced [adrenodoxin] + O2 + H(+) = (25R)-3alpha,7alpha,12alpha-trihydroxy-5beta-cholestan-26-oate + 2 oxidized [adrenodoxin] + H2O. It carries out the reaction 5beta-cholestane-3alpha,7alpha,12alpha-triol + 2 reduced [adrenodoxin] + O2 + 2 H(+) = (25R)-5beta-cholestane-3alpha,7alpha,12alpha,26-tetrol + 2 oxidized [adrenodoxin] + H2O. Its pathway is hormone biosynthesis; cholecalciferol biosynthesis. It participates in steroid metabolism; cholesterol degradation. The protein operates within lipid metabolism; bile acid biosynthesis. Cytochrome P450 monooxygenase that catalyzes regio- and stereospecific hydroxylation of cholesterol and its derivatives. Hydroxylates (with R stereochemistry) the terminal methyl group of cholesterol side-chain in a three step reaction to yield at first a C26 alcohol, then a C26 aldehyde and finally a C26 acid. Regulates cholesterol homeostasis by catalyzing the conversion of excess cholesterol to bile acids via both the 'neutral' (classic) and the 'acid' (alternative) pathways. May also regulate cholesterol homeostasis via generation of active oxysterols, which act as ligands for NR1H2 and NR1H3 nuclear receptors, modulating the transcription of genes involved in lipid metabolism. Plays a role in cholestanol metabolism in the cerebellum. Similarly to cholesterol, hydroxylates cholestanol and may facilitate sterol diffusion through the blood-brain barrier to the systemic circulation for further degradation. Also hydroxylates retinal 7-ketocholesterol, a noxious oxysterol with pro-inflammatory and pro-apoptotic effects, and may play a role in its elimination from the retinal pigment epithelium. May play a redundant role in vitamin D biosynthesis. Catalyzes 25-hydroxylation of vitamin D3 that is required for its conversion to a functionally active form. This chain is Sterol 26-hydroxylase, mitochondrial, found in Homo sapiens (Human).